A 1134-amino-acid polypeptide reads, in one-letter code: MSFRFIYGRAGSGKSKFCIDDIEKRLQEDTNKQLILIVPEQFSFQAEKSVVEKVKGTGITNVKVTSFERIAYDVFNEVGGSTHKIINSSGKLMLIFNIINNLKDELKVFATAANQEGFVNNISDIITELKRYDVTATELRATLNLIEDEFLKDKINDISYIFEQFQESLHKNYIDSEDELTLLYRKIDTSKMFDGAEVWIDEFSSFTPQQYKILEKLMEKASRVNITLCMDYYRVIDGTDVFAPTKRTEEKLREILKEKDVKLDKPIILNNDDVNRFKDSSELKYLEENYFKYPYKPYDKTTDDIKIIRALNPYSEVENIAKEIAKISMESNIRYRDIAVITRDLEGYEKIVKTIFDEYEIPYFIDKKKEIDDNPLIVLITSVIEIFNKSWSYEAMFRYLKTGLSNVSKEEVDLLENYVLAYGIRGKKKWQSPWEYGNENILEKINEIRIKVSEPLIKFSSKLKGKSKADEICSAVYNFLCSIGVNETIEKWVYKFKNEGNQALAKEYSQIWNMVIELLDQVVEVFKEEELQLKDFVKILSLGFKDYKMGLIPPSLDQVLVSDVERVRTHEIKLLYIIGVNDGIFPAVSKDEGILSDSDRGSLKKIGIEIAEDTKSKAFEEQYLIYRTLTTTQKYLRICYSIADYEGKALRPSIIVSRFKSLFPKIAEESDNIAMDYEEENIDLISREIPTFNNLVSVLRREDNKVKVSPFWSDVYKWYSENPRWKETLDTVFSAISYTNAVDDISEEKIRKMYGNKLYLTVSRLEKYAQCPFGYYIKYGLKAKERKIFALTPPDLGTFMHNVIDEFSEVVDKSGFKWYEIEDKWCKDTVSEIVDRKAEESAGGIFTSSARYKYFTERLKRVLIKTILVIIEHLKRSGFQPIGHEVGFGNDEKYPPIEIELSSGEKVKLIGRIDRVDKLDMEKKDYYRIIDYKSGNKDFSLSDVYYGLQLQLLTYLDAILTNEELKDREEALPGGVLYLKIDDPIIKGKRNLSEEEIQDEIMKALKMKGLLLADEEVVKEMDRKIEGNSLIIPARINKDGSLGKSSVGTEEQFRLLREHVKKNLIKACEDMLKGDIKIRPIRSKNADACTYCLYSSICEFDTNFEDNEFKVVQEKKDEEVWELLRKEGEESWEK.

Position 8–15 (8–15 (GRAGSGKS)) interacts with ATP. 4 residues coordinate [4Fe-4S] cluster: Cys771, Cys1089, Cys1092, and Cys1098.

This sequence belongs to the helicase family. AddB/RexB type 1 subfamily. As to quaternary structure, heterodimer of AddA and AddB. Requires Mg(2+) as cofactor. The cofactor is [4Fe-4S] cluster.

Functionally, the heterodimer acts as both an ATP-dependent DNA helicase and an ATP-dependent, dual-direction single-stranded exonuclease. Recognizes the chi site generating a DNA molecule suitable for the initiation of homologous recombination. The AddB subunit has 5' -&gt; 3' nuclease activity but not helicase activity. The polypeptide is ATP-dependent helicase/deoxyribonuclease subunit B (Clostridium novyi (strain NT)).